Here is a 182-residue protein sequence, read N- to C-terminus: Histone deacetylase complex subunit SAP30L (182 aa).

N-acetylmethionine is present on M1. A compositionally biased stretch (acidic residues) spans 1-10 (MNGFSTEEDS). The interval 1-22 (MNGFSTEEDSREGPPAAPAAAP) is disordered. Disulfide bonds link C28-C29 and C37-C73. The Atypical zinc-finger motif lies at 28–76 (CCLIADGERCVRPAGNASFSKRVQKSISQKKLKLDIDKSVRHLYICDFH). Residue K48 forms a Glycyl lysine isopeptide (Lys-Gly) (interchain with G-Cter in SUMO2) linkage. A disordered region spans residues 84–103 (RNKRKRKASDDGGDSPEHDA). The Nuclear localization signal (NLS) motif lies at 85–90 (NKRKRK). The interval 87-89 (RKR) is important for DNA and phosphoinositide binding. S92 and S98 each carry phosphoserine. Residues K154, K165, and K174 each participate in a glycyl lysine isopeptide (Lys-Gly) (interchain with G-Cter in SUMO2) cross-link.

It belongs to the SAP30 family. Interacts with components of the histone deacetylase complex SIN3A, HDAC1 and HDAC2. Binds histones and nucleosomes. Interacts with FEZ1.

Its subcellular location is the nucleus. The protein resides in the nucleolus. In terms of biological role, functions as a transcription repressor, probably via its interaction with histone deacetylase complexes. Involved in the functional recruitment of the class 1 Sin3-histone deacetylase complex (HDAC) to the nucleolus. Binds DNA, apparently without sequence-specificity, and bends bound double-stranded DNA. Binds phosphoinositol phosphates (phosphoinositol 3-phosphate, phosphoinositol 4-phosphate and phosphoinositol 5-phosphate) via the same basic sequence motif that mediates DNA binding and nuclear import. The protein is Histone deacetylase complex subunit SAP30L (Sap30l) of Mus musculus (Mouse).